A 121-amino-acid polypeptide reads, in one-letter code: Basic phospholipase A2 VRV-PL-V (121 aa).

Cystine bridges form between Cys26–Cys115, Cys28–Cys44, Cys43–Cys95, Cys49–Cys121, Cys50–Cys88, Cys57–Cys81, and Cys75–Cys86. Ca(2+) is bound by residues Tyr27, Gly29, and Gly31. The active site involves His47. Asp48 serves as a coordination point for Ca(2+). Residue Asp89 is part of the active site.

Belongs to the phospholipase A2 family. Group II subfamily. D49 sub-subfamily. In terms of assembly, monomer. Ca(2+) is required as a cofactor. In terms of tissue distribution, expressed by the venom gland.

The protein resides in the secreted. It carries out the reaction a 1,2-diacyl-sn-glycero-3-phosphocholine + H2O = a 1-acyl-sn-glycero-3-phosphocholine + a fatty acid + H(+). Its function is as follows. Snake venom phospholipase A2 (PLA2) that has a low enzymatic activity. PLA2 catalyzes the calcium-dependent hydrolysis of the 2-acyl groups in 3-sn-phosphoglycerides. This Daboia russelii (Russel's viper) protein is Basic phospholipase A2 VRV-PL-V.